Here is an 83-residue protein sequence, read N- to C-terminus: MYB-like transcription factor ETC1 (83 aa).

Residues 35–72 (AQEEEDLICRMYKLVGERWDLIAGRIPGRTAEEIERFW) form the Myb-like domain.

Expressed in developing trichomes and non-root hair cells.

It is found in the nucleus. Functionally, MYB-type transcription factor involved in epidermal cell fate specification. Acts as a negative regulator of trichome development, by mediating lateral inhibition. Promotes the formation of hair developing cells in H position in root epidermis, probably by inhibiting non-hair cell formation. In Arabidopsis thaliana (Mouse-ear cress), this protein is MYB-like transcription factor ETC1 (ETC1).